The chain runs to 95 residues: Defensin (95 aa).

The first 17 residues, 1 to 17, serve as a signal peptide directing secretion; it reads MKNYVFALLVVTAVAIA. Positions 18-55 are excised as a propeptide; sequence LPNEDKNAPMRVHLLPQKEDESLKLEVTPVKEHHRTRR. Cystine bridges form between Cys58–Cys85, Cys71–Cys91, and Cys75–Cys93.

It belongs to the invertebrate defensin family. Type 1 subfamily.

The protein resides in the secreted. Antibacterial peptide mostly active against Gram-positive bacteria. This Formica aquilonia (Red wood ant) protein is Defensin.